Reading from the N-terminus, the 168-residue chain is Putative apoptosis regulator A9 (168 aa).

A helical membrane pass occupies residues S143–F162.

Its subcellular location is the host membrane. Functionally, suppresses apoptosis in host cell and thus facilitates production of progeny virions. The sequence is that of Putative apoptosis regulator A9 (A9) from Alcelaphine herpesvirus 1 (strain C500) (AlHV-1).